The sequence spans 167 residues: Lipoprotein signal peptidase (167 aa).

3 helical membrane-spanning segments follow: residues 10–30, 68–88, and 98–118; these read LIWL…KAWV, WQMW…TFWL, and SALP…DRFL. Active-site residues include Asp124 and Asp142. The chain crosses the membrane as a helical span at residues 138-158; sequence FNLADSAIVAGAIGIGLLSLF.

The protein belongs to the peptidase A8 family.

The protein resides in the cell inner membrane. It catalyses the reaction Release of signal peptides from bacterial membrane prolipoproteins. Hydrolyzes -Xaa-Yaa-Zaa-|-(S,diacylglyceryl)Cys-, in which Xaa is hydrophobic (preferably Leu), and Yaa (Ala or Ser) and Zaa (Gly or Ala) have small, neutral side chains.. It functions in the pathway protein modification; lipoprotein biosynthesis (signal peptide cleavage). This protein specifically catalyzes the removal of signal peptides from prolipoproteins. This is Lipoprotein signal peptidase from Xylella fastidiosa (strain M23).